Reading from the N-terminus, the 88-residue chain is U2-ctenitoxin-Pn1a (88 aa).

Residues 1–17 form the signal peptide; sequence MKVAILILSILVLAVAS. Positions 18–34 are excised as a propeptide; sequence ETIEEYRDDFAVEELER. 5 disulfide bridges follow: Cys37-Cys51, Cys44-Cys57, Cys48-Cys86, Cys50-Cys71, and Cys59-Cys69. A propeptide is located at residue Lys88.

Expressed by the venom gland.

The protein resides in the secreted. Functionally, inhibits voltage-gated sodium channels (Nav). Causes scratching, lacrimation, hypersalivation, sweating and agitation followed by spastic paralysis of the anterior and posterior extremities and death at dose levels of 1.62 mg/mouse. Insecticidal to the larval and adult forms of the house fly. This is U2-ctenitoxin-Pn1a from Phoneutria nigriventer (Brazilian armed spider).